The primary structure comprises 137 residues: Insulin-like peptide 2 (137 aa).

The signal sequence occupies residues methionine 1–glycine 26. 3 disulfides stabilise this stretch: cysteine 29–cysteine 119, cysteine 41–cysteine 132, and cysteine 118–cysteine 123. The propeptide at alanine 53–valine 104 is connecting peptide.

This sequence belongs to the insulin family. As to quaternary structure, heterodimer of a B chain and an A chain linked by two disulfide bonds. Broadly expressed at a low level in the embryonic mesoderm, beginning at stage 12. Expressed at a high level in the embryonic anterior midgut, with expression diminishing at late stage 16. Expressed at a low level in larval imaginal disks. Expressed at a high level in larval salivary glands and in seven cells of each larval brain hemisphere that may correspond to neurosecretory cells.

Its subcellular location is the secreted. In terms of biological role, possible ligand of InR/insulin-like receptor. Functionally, plays a role in regulating body size by increasing cell size and cell number of individual organs. Probably mediates its growth effects by acting as a ligand for the insulin receptor and transducing a signal via the Chico/PI3K/Akt(PKB) pathway. The protein is Insulin-like peptide 2 of Drosophila melanogaster (Fruit fly).